We begin with the raw amino-acid sequence, 187 residues long: Protein GrpE (187 aa).

A compositionally biased stretch (basic and acidic residues) spans 1-15 (MKETKQEEMEVREDC). The interval 1-40 (MKETKQEEMEVREDCESVDSNLEATVEEMESTKGTSEDLE) is disordered.

This sequence belongs to the GrpE family. In terms of assembly, homodimer.

Its subcellular location is the cytoplasm. In terms of biological role, participates actively in the response to hyperosmotic and heat shock by preventing the aggregation of stress-denatured proteins, in association with DnaK and GrpE. It is the nucleotide exchange factor for DnaK and may function as a thermosensor. Unfolded proteins bind initially to DnaJ; upon interaction with the DnaJ-bound protein, DnaK hydrolyzes its bound ATP, resulting in the formation of a stable complex. GrpE releases ADP from DnaK; ATP binding to DnaK triggers the release of the substrate protein, thus completing the reaction cycle. Several rounds of ATP-dependent interactions between DnaJ, DnaK and GrpE are required for fully efficient folding. The sequence is that of Protein GrpE from Alkaliphilus oremlandii (strain OhILAs) (Clostridium oremlandii (strain OhILAs)).